The following is a 445-amino-acid chain: DDB1- and CUL4-associated factor 13 (445 aa).

An N6-acetyllysine modification is found at Lys-49. WD repeat units follow at residues 64–104 (GHRD…CIRT), 107–146 (AHEGFVRGICTRFCGTSFFTVGDDKTVKQWKMDGPGYGDE), 149–191 (PLHT…PICS), 194–234 (WGFD…PLKK), 236–276 (ILDM…TPVM), 280–319 (DHVSAVLDVDYSPTGKEFVSASFDKSIRIFPVDKSRSREV), and 323–362 (KRMQHVICVKWTSDSKYIMCGSDEMNIRLWKANASEKLGV). Positions 353 to 441 (KANASEKLGV…LVSEKKKHVV (89 aa)) are required for nucleolar location.

It belongs to the WD repeat DCAF13/WDSOF1 family. As to quaternary structure, part of the small subunit (SSU) processome, composed of more than 70 proteins and the RNA chaperone small nucleolar RNA (snoRNA) U3. Component of the DCX(DCAF13) E3 ubiquitin ligase complex, at least composed of CUL4 (CUL4A or CUL4B), DDB1, DCAF13 and RBX1. Interacts (via WD40 domain) with DDB1. Interacts with ESR1 and LATS1. In terms of tissue distribution, expressed in the endometrium during decidualization. Expression is down-regulated in preeclampsia decidual tissues.

It localises to the nucleus. Its subcellular location is the nucleolus. The protein operates within protein modification; protein ubiquitination. Functionally, part of the small subunit (SSU) processome, first precursor of the small eukaryotic ribosomal subunit. During the assembly of the SSU processome in the nucleolus, many ribosome biogenesis factors, an RNA chaperone and ribosomal proteins associate with the nascent pre-rRNA and work in concert to generate RNA folding, modifications, rearrangements and cleavage as well as targeted degradation of pre-ribosomal RNA by the RNA exosome. Participates in the 18S rRNA processing in growing oocytes, being essential for oocyte nonsurrounded nucleolus (NSN) to surrounded nucleolus (SN) transition. Substrate-recognition component of a DCX (DDB1-CUL4-X-box) E3 ubiquitin-protein ligase complex that plays a key role in embryo preimplantation and is required for normal meiotic cycle progression in oocytes. Acts as a maternal factor that regulates oocyte and zygotic chromatin tightness during maternal to zygotic transition. Also involved in the transformation of the endometrium into the decidua, known as decidualization, providing a solid foundation for implantation of blastocysts. Recognizes the histone methyltransferases SUV39H1 and SUV39H2 and directs them to polyubiquitination and proteasomal degradation, which facilitates the H3K9me3 removal and early zygotic gene expression, essential steps for progressive genome reprogramming and the establishment of pluripotency during preimplantation embryonic development. Supports the spindle assembly and chromosome condensation during oocyte meiotic division by targeting the polyubiquitination and degradation of PTEN, a lipid phosphatase that inhibits PI3K pathway as well as oocyte growth and maturation. Targets PMP22 for polyubiquitination and proteasomal degradation. The sequence is that of DDB1- and CUL4-associated factor 13 from Homo sapiens (Human).